A 361-amino-acid chain; its full sequence is Phosphoserine aminotransferase (361 aa).

Arginine 42 contacts L-glutamate. Pyridoxal 5'-phosphate is bound by residues 76–77 (AT), tryptophan 102, threonine 152, aspartate 172, and glutamine 195. Lysine 196 carries the post-translational modification N6-(pyridoxal phosphate)lysine. 237 to 238 (NT) contacts pyridoxal 5'-phosphate.

The protein belongs to the class-V pyridoxal-phosphate-dependent aminotransferase family. SerC subfamily. As to quaternary structure, homodimer. Requires pyridoxal 5'-phosphate as cofactor.

Its subcellular location is the cytoplasm. It catalyses the reaction O-phospho-L-serine + 2-oxoglutarate = 3-phosphooxypyruvate + L-glutamate. The enzyme catalyses 4-(phosphooxy)-L-threonine + 2-oxoglutarate = (R)-3-hydroxy-2-oxo-4-phosphooxybutanoate + L-glutamate. The protein operates within amino-acid biosynthesis; L-serine biosynthesis; L-serine from 3-phospho-D-glycerate: step 2/3. Its pathway is cofactor biosynthesis; pyridoxine 5'-phosphate biosynthesis; pyridoxine 5'-phosphate from D-erythrose 4-phosphate: step 3/5. Functionally, catalyzes the reversible conversion of 3-phosphohydroxypyruvate to phosphoserine and of 3-hydroxy-2-oxo-4-phosphonooxybutanoate to phosphohydroxythreonine. The sequence is that of Phosphoserine aminotransferase from Xanthomonas oryzae pv. oryzae (strain MAFF 311018).